The primary structure comprises 577 residues: Glycine--tRNA ligase (577 aa).

2 residues coordinate substrate: arginine 96 and glutamate 161. ATP-binding positions include 193 to 195 (RNE), 203 to 208 (IRLREF), 319 to 320 (EI), and 434 to 437 (GIDR). 208 to 212 (FSQAE) contacts substrate. 430-434 (EPSFG) contacts substrate.

The protein belongs to the class-II aminoacyl-tRNA synthetase family.

It is found in the cytoplasm. The catalysed reaction is tRNA(Gly) + glycine + ATP = glycyl-tRNA(Gly) + AMP + diphosphate. Its function is as follows. Catalyzes the attachment of glycine to tRNA(Gly). This chain is Glycine--tRNA ligase, found in Methanothrix thermoacetophila (strain DSM 6194 / JCM 14653 / NBRC 101360 / PT) (Methanosaeta thermophila).